We begin with the raw amino-acid sequence, 579 residues long: Glucose starvation modulator protein 1 (579 aa).

A DNA-binding region (zn(2)-C6 fungal-type) is located at residues Cys-20–Cys-48. A compositionally biased stretch (basic and acidic residues) spans Gly-43–Arg-53. Disordered regions lie at residues Gly-43 to Ser-75 and Gln-319 to Val-342. Basic residues predominate over residues Lys-54–Lys-64. Over residues Asn-330 to Gly-339 the composition is skewed to polar residues. The PAS domain occupies Leu-444–Gly-516.

The protein belongs to the ERT1/acuK family.

The protein resides in the nucleus. In terms of biological role, transcription factor which regulates nonfermentable carbon utilization. The chain is Glucose starvation modulator protein 1 (GSM1) from Kluyveromyces lactis (strain ATCC 8585 / CBS 2359 / DSM 70799 / NBRC 1267 / NRRL Y-1140 / WM37) (Yeast).